A 455-amino-acid chain; its full sequence is Kynurenine 3-monooxygenase (455 aa).

It belongs to the aromatic-ring hydroxylase family. KMO subfamily. It depends on FAD as a cofactor.

It carries out the reaction L-kynurenine + NADPH + O2 + H(+) = 3-hydroxy-L-kynurenine + NADP(+) + H2O. Its pathway is cofactor biosynthesis; NAD(+) biosynthesis; quinolinate from L-kynurenine: step 1/3. Functionally, catalyzes the hydroxylation of L-kynurenine (L-Kyn) to form 3-hydroxy-L-kynurenine (L-3OHKyn). Required for synthesis of quinolinic acid. The chain is Kynurenine 3-monooxygenase from Xanthomonas axonopodis pv. citri (strain 306).